Consider the following 281-residue polypeptide: Probable endonuclease 4 (281 aa).

The Zn(2+) site is built by His-69, His-109, Glu-145, Asp-179, His-182, His-216, Asp-229, His-231, and Glu-261.

The protein belongs to the AP endonuclease 2 family. Requires Zn(2+) as cofactor.

It catalyses the reaction Endonucleolytic cleavage to 5'-phosphooligonucleotide end-products.. Endonuclease IV plays a role in DNA repair. It cleaves phosphodiester bonds at apurinic or apyrimidinic (AP) sites, generating a 3'-hydroxyl group and a 5'-terminal sugar phosphate. The chain is Probable endonuclease 4 from Aeromonas hydrophila subsp. hydrophila (strain ATCC 7966 / DSM 30187 / BCRC 13018 / CCUG 14551 / JCM 1027 / KCTC 2358 / NCIMB 9240 / NCTC 8049).